The primary structure comprises 99 residues: Endothelin receptor type B (99 aa).

The Extracellular portion of the chain corresponds to 1-8 (PFGAEMCK). Residues C7 and C88 are joined by a disulfide bond. A helical membrane pass occupies residues 9-30 (LVPFIQKASVGITVLSLCALSI). The Cytoplasmic segment spans residues 31–51 (DRYRAVASWSRIKGIGIPKWT). The chain crosses the membrane as a helical span at residues 52–76 (AVEIVLIWVVSVVLAVPEAIGFDMI). The Extracellular segment spans residues 77–99 (TMDYKGSYLRICLLHPVQKTAFM).

It belongs to the G-protein coupled receptor 1 family. Endothelin receptor subfamily. EDNRB sub-subfamily.

It localises to the cell membrane. In terms of biological role, non-specific receptor for endothelin 1, 2, and 3. Mediates its action by association with G proteins that activate a phosphatidylinositol-calcium second messenger system. The polypeptide is Endothelin receptor type B (EDNRB) (Macaca fascicularis (Crab-eating macaque)).